A 548-amino-acid chain; its full sequence is Chaperone Ric-8A (548 aa).

Disordered regions lie at residues 443-484 (DPGH…EGMT) and 517-548 (GKMT…SDTN).

It belongs to the synembryn family.

It localises to the cytoplasm. It is found in the cell cortex. Its function is as follows. Chaperone that specifically binds and folds nascent G alpha proteins prior to G protein heterotrimer formation, promoting their stability and activity: folds GNAI1, GNAO1, GNA13 and GNAQ. Does not fold G(s) G-alpha proteins GNAS nor GNAL. Also acts as a guanine nucleotide exchange factor (GEF) for G alpha proteins by stimulating exchange of bound GDP for free GTP. This is Chaperone Ric-8A (ric8a) from Danio rerio (Zebrafish).